A 311-amino-acid chain; its full sequence is Meteorin-like protein (311 aa).

Residues 1-45 (MRGAVWAARRRAGQQWPRSPGPGPGPPPPPPLLLLLLLLLGGASA) form the signal peptide. Cysteines 52 and 75 form a disulfide. Asn103 is a glycosylation site (N-linked (GlcNAc...) asparagine). 4 cysteine pairs are disulfide-bonded: Cys107–Cys143, Cys188–Cys260, Cys191–Cys284, and Cys201–Cys306.

This sequence belongs to the meteorin family. Post-translationally, N-glycosylated. As to expression, highly expressed in subcutaneous adipose tissue.

Its subcellular location is the secreted. In terms of biological role, hormone induced following exercise or cold exposure that promotes energy expenditure. Induced either in the skeletal muscle after exercise or in adipose tissue following cold exposure and is present in the circulation. Able to stimulate energy expenditure associated with the browning of the white fat depots and improves glucose tolerance. Does not promote an increase in a thermogenic gene program via direct action on adipocytes, but acts by stimulating several immune cell subtypes to enter the adipose tissue and activate their prothermogenic actions. Stimulates an eosinophil-dependent increase in IL4 expression and promotes alternative activation of adipose tissue macrophages, which are required for the increased expression of the thermogenic and anti-inflammatory gene programs in fat. Required for some cold-induced thermogenic responses, suggesting a role in metabolic adaptations to cold temperatures. The protein is Meteorin-like protein (Metrnl) of Mus musculus (Mouse).